The chain runs to 211 residues: Uracil phosphoribosyltransferase (211 aa).

Residues R77, R102, and 129–137 contribute to the 5-phospho-alpha-D-ribose 1-diphosphate site; that span reads DPMLATGGS. Uracil contacts are provided by residues I192 and 197 to 199; that span reads GDA. Residue D198 coordinates 5-phospho-alpha-D-ribose 1-diphosphate.

Belongs to the UPRTase family. Mg(2+) serves as cofactor.

It carries out the reaction UMP + diphosphate = 5-phospho-alpha-D-ribose 1-diphosphate + uracil. It functions in the pathway pyrimidine metabolism; UMP biosynthesis via salvage pathway; UMP from uracil: step 1/1. Allosterically activated by GTP. Functionally, catalyzes the conversion of uracil and 5-phospho-alpha-D-ribose 1-diphosphate (PRPP) to UMP and diphosphate. This Corynebacterium efficiens (strain DSM 44549 / YS-314 / AJ 12310 / JCM 11189 / NBRC 100395) protein is Uracil phosphoribosyltransferase.